The primary structure comprises 136 residues: Large ribosomal subunit protein bL17 (136 aa).

Belongs to the bacterial ribosomal protein bL17 family. In terms of assembly, part of the 50S ribosomal subunit. Contacts protein L32.

The polypeptide is Large ribosomal subunit protein bL17 (Rickettsia conorii (strain ATCC VR-613 / Malish 7)).